The chain runs to 406 residues: Tyrosine-specific transport system 2 (406 aa).

Helical transmembrane passes span 7-27, 38-58, 83-103, 119-139, 150-170, 183-203, 219-239, 279-299, 314-334, 335-355, and 376-396; these read FGSA…AMPL, LLLL…FVEV, IFAT…YITG, AMSL…FVVV, VLFI…LPKV, AFVV…VIMA, AILI…LATH, VFSS…VFEG, FVLT…YPEG, FITA…ILPI, and NFAL…PFLI.

The protein belongs to the amino acid/polyamine transporter 2 family. Mtr/TnaB/TyrP permease subfamily.

The protein localises to the cell inner membrane. The catalysed reaction is L-tyrosine(in) + H(+)(in) = L-tyrosine(out) + H(+)(out). In terms of biological role, transports tyrosine across the cytoplasmic membrane. The transport system is energized by the proton motive force. This Haemophilus influenzae (strain ATCC 51907 / DSM 11121 / KW20 / Rd) protein is Tyrosine-specific transport system 2 (tyrP-B).